Here is a 235-residue protein sequence, read N- to C-terminus: Probable tetraspanin tspA (235 aa).

Over 1 to 18 (MVDTSNLLPQTPRLLKVP) the chain is Cytoplasmic. The chain crosses the membrane as a helical span at residues 19-39 (LIILNIILWILGLVLVIVGGI). The Extracellular portion of the chain corresponds to 40-68 (CVSFLSNFKDFTKASDAKSALSNLTTSIP). A glycan (N-linked (GlcNAc...) asparagine) is linked at Asn62. Residues 69 to 89 (AGVLVIGILFVIFTVVGCFVA) traverse the membrane as a helical segment. The Cytoplasmic portion of the chain corresponds to 90–93 (YKEK). A helical membrane pass occupies residues 94-114 (LVGLVIYCAVMLILLVILIGV). At 115-200 (GGKAITLHND…FSSKIYAVGA (86 aa)) the chain is on the extracellular side. Residues Asn139, Asn143, and Asn160 are each glycosylated (N-linked (GlcNAc...) asparagine). A helical transmembrane segment spans residues 201–221 (AGLAIGIIELVAILFSLFLII). The Cytoplasmic portion of the chain corresponds to 222–235 (RICRSPRTRSYDQY).

The protein belongs to the tetraspanin (TM4SF) family.

The protein resides in the membrane. The chain is Probable tetraspanin tspA (tspA) from Dictyostelium discoideum (Social amoeba).